Here is a 462-residue protein sequence, read N- to C-terminus: Cysteine--tRNA ligase (462 aa).

C30 serves as a coordination point for Zn(2+). A 'HIGH' region motif is present at residues 32–42; sequence PTVYDRAHLGN. Residues C221, H246, and E250 each contribute to the Zn(2+) site. The 'KMSKS' region signature appears at 279-283; that stretch reads KMSKS. ATP is bound at residue K282.

This sequence belongs to the class-I aminoacyl-tRNA synthetase family. Monomer. The cofactor is Zn(2+).

Its subcellular location is the cytoplasm. The enzyme catalyses tRNA(Cys) + L-cysteine + ATP = L-cysteinyl-tRNA(Cys) + AMP + diphosphate. The protein is Cysteine--tRNA ligase of Paracoccus denitrificans (strain Pd 1222).